The following is a 400-amino-acid chain: AA13 family lytic polysaccharide monooxygenase A (400 aa).

Positions 1–17 are cleaved as a signal peptide; it reads MLLTVLAVVGCFTAVNG. Position 18 (His18) interacts with Cu(2+). His18 is modified (methylhistidine). The Chitin-binding type-4 domain maps to 18-247; that stretch reads HGYLTIPASR…AQVYLHCADI (230 aa). 7 disulfide bridges follow: Cys39-Cys42, Cys65-Cys244, Cys101-Cys202, Cys117-Cys144, Cys152-Cys160, Cys166-Cys172, and Cys180-Cys191. Position 108 (His108) interacts with Cu(2+). Asn119 is a glycosylation site (N-linked (GlcNAc...) asparagine). A Cu(2+)-binding site is contributed by Tyr241. The disordered stretch occupies residues 254–287; that stretch reads GGTTSKSTTSTTSTTSTSRSTSTSAPTTTSSAST. The span at 257–287 shows a compositional bias: low complexity; it reads TSKSTTSTTSTTSTSRSTSTSAPTTTSSAST. The CBM20 domain maps to 293-400; sequence TTQASLIPVT…TTATAAASWR (108 aa). The N-linked (GlcNAc...) asparagine glycan is linked to Asn379.

Belongs to the polysaccharide monooxygenase AA13 family. Cu(2+) serves as cofactor. In terms of processing, O-mannosylated.

It localises to the secreted. The catalysed reaction is starch + reduced acceptor + O2 = D-glucono-1,5-lactone-terminated malto-oligosaccharides + short-chain malto-oligosaccharides + acceptor + H2O.. With respect to regulation, activity is inhibited by both beta-cyclodextrin or amylose that block the access to the active site. Functionally, starch-active lytic polysaccharide monooxygenase that oxidizes the C1 position of starch substrates. Catalysis by LPMOs requires the reduction of the active-site copper from Cu(II) to Cu(I) by a reducing agent and H(2)O(2) or O(2) as a cosubstrate. In Aspergillus terreus (strain NIH 2624 / FGSC A1156), this protein is AA13 family lytic polysaccharide monooxygenase A.